The sequence spans 518 residues: 3-octaprenyl-4-hydroxybenzoate carboxy-lyase (518 aa).

Asparagine 177 provides a ligand contact to Mn(2+). Residues 180–182 (IYR), 194–196 (RWL), and 199–200 (RG) each bind prenylated FMN. Glutamate 243 contacts Mn(2+). Aspartate 318 (proton donor) is an active-site residue.

This sequence belongs to the UbiD family. As to quaternary structure, homohexamer. The cofactor is prenylated FMN. Requires Mn(2+) as cofactor.

Its subcellular location is the cell membrane. It carries out the reaction a 4-hydroxy-3-(all-trans-polyprenyl)benzoate + H(+) = a 2-(all-trans-polyprenyl)phenol + CO2. The protein operates within cofactor biosynthesis; ubiquinone biosynthesis. Functionally, catalyzes the decarboxylation of 3-octaprenyl-4-hydroxy benzoate to 2-octaprenylphenol, an intermediate step in ubiquinone biosynthesis. This Burkholderia lata (strain ATCC 17760 / DSM 23089 / LMG 22485 / NCIMB 9086 / R18194 / 383) protein is 3-octaprenyl-4-hydroxybenzoate carboxy-lyase.